Here is a 492-residue protein sequence, read N- to C-terminus: N-succinylglutamate 5-semialdehyde dehydrogenase (492 aa).

220–225 (GSASTG) lines the NAD(+) pocket. Residues Glu243 and Cys277 contribute to the active site.

Belongs to the aldehyde dehydrogenase family. AstD subfamily.

The catalysed reaction is N-succinyl-L-glutamate 5-semialdehyde + NAD(+) + H2O = N-succinyl-L-glutamate + NADH + 2 H(+). Its pathway is amino-acid degradation; L-arginine degradation via AST pathway; L-glutamate and succinate from L-arginine: step 4/5. In terms of biological role, catalyzes the NAD-dependent reduction of succinylglutamate semialdehyde into succinylglutamate. In Salmonella heidelberg (strain SL476), this protein is N-succinylglutamate 5-semialdehyde dehydrogenase.